A 125-amino-acid chain; its full sequence is Small ribosomal subunit protein uS12 (125 aa).

Residue aspartate 89 is modified to 3-methylthioaspartic acid. The interval 106–125 (GVKDRKQSRSKYGAKRPKKA) is disordered. Positions 113 to 125 (SRSKYGAKRPKKA) are enriched in basic residues.

Belongs to the universal ribosomal protein uS12 family. In terms of assembly, part of the 30S ribosomal subunit. Contacts proteins S8 and S17. May interact with IF1 in the 30S initiation complex.

In terms of biological role, with S4 and S5 plays an important role in translational accuracy. Its function is as follows. Interacts with and stabilizes bases of the 16S rRNA that are involved in tRNA selection in the A site and with the mRNA backbone. Located at the interface of the 30S and 50S subunits, it traverses the body of the 30S subunit contacting proteins on the other side and probably holding the rRNA structure together. The combined cluster of proteins S8, S12 and S17 appears to hold together the shoulder and platform of the 30S subunit. The chain is Small ribosomal subunit protein uS12 from Variovorax paradoxus (strain S110).